Here is a 97-residue protein sequence, read N- to C-terminus: Large ribosomal subunit protein bL28 (97 aa).

The protein belongs to the bacterial ribosomal protein bL28 family.

This Bartonella quintana (strain Toulouse) (Rochalimaea quintana) protein is Large ribosomal subunit protein bL28.